The following is a 327-amino-acid chain: Phospho-N-acetylmuramoyl-pentapeptide-transferase (327 aa).

A run of 10 helical transmembrane segments spans residues 3–23, 51–71, 75–95, 115–135, 140–160, 172–192, 197–217, 223–243, 248–268, and 306–326; these read IALI…PAFI, TMGG…IGLF, LSNG…VGFL, LFLQ…HGAG, IFTV…FWLI, IDGL…VIAV, FDIL…FVFN, IFMG…ISIS, WTLL…MMQV, and VDFF…AILY.

Belongs to the glycosyltransferase 4 family. MraY subfamily. It depends on Mg(2+) as a cofactor.

Its subcellular location is the cell membrane. It catalyses the reaction UDP-N-acetyl-alpha-D-muramoyl-L-alanyl-gamma-D-glutamyl-L-lysyl-D-alanyl-D-alanine + di-trans,octa-cis-undecaprenyl phosphate = Mur2Ac(oyl-L-Ala-gamma-D-Glu-L-Lys-D-Ala-D-Ala)-di-trans,octa-cis-undecaprenyl diphosphate + UMP. It functions in the pathway cell wall biogenesis; peptidoglycan biosynthesis. Functionally, catalyzes the initial step of the lipid cycle reactions in the biosynthesis of the cell wall peptidoglycan: transfers peptidoglycan precursor phospho-MurNAc-pentapeptide from UDP-MurNAc-pentapeptide onto the lipid carrier undecaprenyl phosphate, yielding undecaprenyl-pyrophosphoryl-MurNAc-pentapeptide, known as lipid I. The polypeptide is Phospho-N-acetylmuramoyl-pentapeptide-transferase (Streptococcus sanguinis (strain SK36)).